The primary structure comprises 839 residues: Taste receptor type 1 member 2 (839 aa).

Positions 1–19 are cleaved as a signal peptide; sequence MGTRATTICSLFFLLWVLA. At 20–566 the chain is on the extracellular side; the sequence is EPAENSDFYL…VFLEWHEAPT (547 aa). N-linked (GlcNAc...) asparagine glycosylation is found at Asn-84, Asn-248, Asn-292, Asn-312, Asn-368, Asn-407, Asn-428, Asn-487, and Asn-527. The helical transmembrane segment at 567–587 threads the bilayer; the sequence is IAVALLAALGFLSTLAILVIF. Residues 588-602 are Cytoplasmic-facing; sequence WRHFQTPIVRSAGGP. The chain crosses the membrane as a helical span at residues 603-623; the sequence is MCFLMLTLLLVAYMVVPVYVG. The Extracellular segment spans residues 624 to 635; that stretch reads PPKVSTCLCRQA. The helical transmembrane segment at 636 to 656 threads the bilayer; that stretch reads LFPLCFTICISCIAVRSFQIV. The Cytoplasmic segment spans residues 657–681; it reads CAFKMASRFPRAYSYWVRYQGPYVS. A helical transmembrane segment spans residues 682-702; the sequence is MAFITVLKMVIVVIGMLATGL. The Extracellular segment spans residues 703–727; it reads SPTTRTDPDDPKITIVSCNPNYRNS. The chain crosses the membrane as a helical span at residues 728 to 748; sequence LLFNTSLDLLLSVVGFSFAYM. Residues 749-760 lie on the Cytoplasmic side of the membrane; that stretch reads GKELPTNYNEAK. A helical transmembrane segment spans residues 761–781; it reads FITLSMTFYFTSSVSLCTFMS. At 782-784 the chain is on the extracellular side; that stretch reads AYS. The helical transmembrane segment at 785–805 threads the bilayer; sequence GVLVTIVDLLVTVLNLLAISL. Residues 806–839 lie on the Cytoplasmic side of the membrane; that stretch reads GYFGPKCYMILFYPERNTPAYFNSMIQGYTMRRD.

It belongs to the G-protein coupled receptor 3 family. TAS1R subfamily. As to quaternary structure, forms heterodimers with TAS1R3.

The protein localises to the cell membrane. In terms of biological role, putative taste receptor. TAS1R2/TAS1R3 recognizes diverse natural and synthetic sweeteners. The protein is Taste receptor type 1 member 2 (TAS1R2) of Gorilla gorilla gorilla (Western lowland gorilla).